The primary structure comprises 334 residues: Transposase for insertion sequence element IS1328 (334 aa).

This sequence belongs to the transposase IS1111A/IS1328/IS1533 family.

Functionally, required for the transposition of the insertion element. The chain is Transposase for insertion sequence element IS1328 from Yersinia enterocolitica.